The sequence spans 689 residues: Glycine--tRNA ligase beta subunit (689 aa).

It belongs to the class-II aminoacyl-tRNA synthetase family. In terms of assembly, tetramer of two alpha and two beta subunits.

The protein localises to the cytoplasm. It catalyses the reaction tRNA(Gly) + glycine + ATP = glycyl-tRNA(Gly) + AMP + diphosphate. This Acinetobacter baylyi (strain ATCC 33305 / BD413 / ADP1) protein is Glycine--tRNA ligase beta subunit.